The following is a 296-amino-acid chain: Phosphatidylcholine:diacylglycerol cholinephosphotransferase 2 (296 aa).

Transmembrane regions (helical) follow at residues 83–103 (HWIP…EYTF), 136–156 (VLAA…GCTW), 165–182 (TIAA…GYST), 198–218 (PVGN…SMIA), and 250–270 (GHYT…DSLA). Residues His-211, His-251, and Asp-255 contribute to the active site.

This sequence belongs to the phosphatidylcholine:diacylglycerol cholinephosphotransferase family.

It localises to the membrane. Functionally, functions as a phosphatidylcholine:diacylglycerol cholinephosphotransferase that catalyzes the transfer of the phosphocholine headgroup from phosphatidylcholine (PC) to diacylglycerol, a major reaction for the transfer of 18:1 into phosphatidylcholine for desaturation and also for the reverse transfer of 18:2 and 18:3 into the triacylglycerols synthesis pathway. The chain is Phosphatidylcholine:diacylglycerol cholinephosphotransferase 2 from Arabidopsis thaliana (Mouse-ear cress).